We begin with the raw amino-acid sequence, 137 residues long: Outer membrane protein assembly factor BamE (137 aa).

A signal peptide spans 1–18 (MQVKTLLGATFLALSLAS). The N-palmitoyl cysteine moiety is linked to residue Cys19. Cys19 carries S-diacylglycerol cysteine lipidation.

Belongs to the BamE family. Part of the Bam complex.

It localises to the cell outer membrane. Part of the outer membrane protein assembly complex, which is involved in assembly and insertion of beta-barrel proteins into the outer membrane. The protein is Outer membrane protein assembly factor BamE of Haemophilus influenzae (strain ATCC 51907 / DSM 11121 / KW20 / Rd).